We begin with the raw amino-acid sequence, 258 residues long: MDRIIEKLDRGWWIVSHEQKLWLPAGELPHGDAEQFDLVGQPALKIGEWQGDAVWLIQQNRRQDMGSVRQVMDLDAGLFQLAGRGVQLAEFYRSHKFCGYCGHAMHPSKTEWALLCSHCRERYYPQIAPCIIVAIRRDDSILLAQHVRHRNGIHTVLAGFVEVGETLEQTVAREVMEESGIKVKNLRYVTSQPWPFPMSLMTAFMADYDSGDIVIDPKELLEANWYRYDDLPLLPPPGTVARRLIEDTVAMCRADYEV.

Arg69 lines the substrate pocket. The Zn(2+) site is built by Cys98 and Cys101. Glu111 contacts substrate. Positions 116 and 119 each coordinate Zn(2+). Tyr124 provides a ligand contact to substrate. The Nudix hydrolase domain maps to 125 to 248 (PQIAPCIIVA…TVARRLIEDT (124 aa)). A divalent metal cation-binding residues include Ala158, Glu174, and Glu178. The short motif at 159-180 (GFVEVGETLEQTVAREVMEESG) is the Nudix box element. A substrate-binding site is contributed by 192-199 (QPWPFPMS). An a divalent metal cation-binding site is contributed by Glu219. Ala241 lines the substrate pocket.

It belongs to the Nudix hydrolase family. NudC subfamily. As to quaternary structure, homodimer. The cofactor is Mg(2+). It depends on Mn(2+) as a cofactor. Zn(2+) serves as cofactor.

It carries out the reaction a 5'-end NAD(+)-phospho-ribonucleoside in mRNA + H2O = a 5'-end phospho-adenosine-phospho-ribonucleoside in mRNA + beta-nicotinamide D-ribonucleotide + 2 H(+). It catalyses the reaction NAD(+) + H2O = beta-nicotinamide D-ribonucleotide + AMP + 2 H(+). The catalysed reaction is NADH + H2O = reduced beta-nicotinamide D-ribonucleotide + AMP + 2 H(+). Its function is as follows. mRNA decapping enzyme that specifically removes the nicotinamide adenine dinucleotide (NAD) cap from a subset of mRNAs by hydrolyzing the diphosphate linkage to produce nicotinamide mononucleotide (NMN) and 5' monophosphate mRNA. The NAD-cap is present at the 5'-end of some mRNAs and stabilizes RNA against 5'-processing. Has preference for mRNAs with a 5'-end purine. Catalyzes the hydrolysis of a broad range of dinucleotide pyrophosphates. The polypeptide is NAD-capped RNA hydrolase NudC (Enterobacter sp. (strain 638)).